The following is a 417-amino-acid chain: Fatty-acid peroxygenase (417 aa).

A heme-binding site is contributed by C363.

This sequence belongs to the cytochrome P450 family. Heme is required as a cofactor.

It carries out the reaction a 1,2-saturated fatty acid + H2O2 = a 2-hydroxy fatty acid + H2O. It catalyses the reaction a 2,3-saturated fatty acid + H2O2 = a 3-hydroxy fatty acid + H2O. The enzyme catalyses tetradecanoate + H2O2 = (3R)-hydroxytetradecanoate + H2O. The catalysed reaction is tetradecanoate + H2O2 = (2R)-hydroxytetradecanoate + H2O. It carries out the reaction tetradecanoate + H2O2 = (2S)-hydroxytetradecanoate + H2O. Catalyzes the alpha- and beta-hydroxylation of myristic acid in the presence of hydrogen peroxide. The polypeptide is Fatty-acid peroxygenase (cypC) (Bacillus subtilis (strain 168)).